Consider the following 493-residue polypeptide: Probable cytosol aminopeptidase (493 aa).

Residues lysine 260 and aspartate 265 each coordinate Mn(2+). Lysine 272 is an active-site residue. Residues aspartate 284, aspartate 343, and glutamate 345 each contribute to the Mn(2+) site. The active site involves arginine 347.

Belongs to the peptidase M17 family. It depends on Mn(2+) as a cofactor.

Its subcellular location is the cytoplasm. It carries out the reaction Release of an N-terminal amino acid, Xaa-|-Yaa-, in which Xaa is preferably Leu, but may be other amino acids including Pro although not Arg or Lys, and Yaa may be Pro. Amino acid amides and methyl esters are also readily hydrolyzed, but rates on arylamides are exceedingly low.. It catalyses the reaction Release of an N-terminal amino acid, preferentially leucine, but not glutamic or aspartic acids.. Its function is as follows. Presumably involved in the processing and regular turnover of intracellular proteins. Catalyzes the removal of unsubstituted N-terminal amino acids from various peptides. This Nostoc punctiforme (strain ATCC 29133 / PCC 73102) protein is Probable cytosol aminopeptidase.